The sequence spans 204 residues: Abscisic acid receptor PYL3 (204 aa).

The interval 40 to 191 (HEPRDHQCSS…NLKSLAEVSE (152 aa)) is START-like. A disulfide bridge links C47 with C172. Abscisate-binding positions include K76, 104-109 (ATRSTE), 131-137 (RLKNYSS), and E156. The Gate loop motif lies at 100-104 (SGLPA). The short motif at 130–132 (HRL) is the Latch loop element.

It belongs to the PYR/PYL/RCAR abscisic acid intracellular receptor family. Monomer. Interacts with PP2C50. Binding to PP2C50 is dependent on the presence of abscisic acid (ABA). Interacts with PP2C30 and PP2C53.

It localises to the cytoplasm. Its subcellular location is the cytosol. The protein localises to the nucleus. In terms of biological role, involved in abscisic acid (ABA) signaling during seed germination and abiotic stress response. Acts as a positive regulator of ABA-mediated inhibition of seed germination, and tolerance to drought and cold stresses. Together with PP2C50 and SAPK10, may form an ABA signaling module involved in stress response. Inhibits the protein phosphatases PP2C06 and PP2C09 when activated by abscisic acid (ABA). This Oryza sativa subsp. japonica (Rice) protein is Abscisic acid receptor PYL3.